Here is a 192-residue protein sequence, read N- to C-terminus: ER membrane protein complex subunit 8/9 homolog (192 aa).

An MPN domain is found at 5-135; it reads ISITTEALSK…LVSIDKVGSD (131 aa).

It belongs to the EMC8/EMC9 family.

The polypeptide is ER membrane protein complex subunit 8/9 homolog (Dictyostelium discoideum (Social amoeba)).